Reading from the N-terminus, the 125-residue chain is Ribosome maturation factor RimP (125 aa).

It belongs to the RimP family.

It localises to the cytoplasm. Its function is as follows. Required for maturation of 30S ribosomal subunits. This is Ribosome maturation factor RimP from Rickettsia canadensis (strain McKiel).